We begin with the raw amino-acid sequence, 475 residues long: Serralysin G (475 aa).

The propeptide occupies 1 to 14; the sequence is MALYGKKTDLSSAS. His-186 serves as a coordination point for Zn(2+). Glu-187 is a catalytic residue. His-190 and Tyr-226 together coordinate Zn(2+). Ca(2+) is bound by residues Arg-261, Gly-263, Thr-265, Asp-293, Gly-295, Gly-296, Asp-298, Glu-337, Gly-342, Gly-344, Asp-346, Asn-351, Asn-355, Gly-359, Gly-360, Ala-361, Gly-362, Asp-364, Gly-368, Gly-370, Gly-371, Asp-373, Gly-377, Gly-378, Ala-379, Gly-380, Asp-382, Asp-391, Asp-398, and Asp-408. Hemolysin-type calcium-binding repeat units follow at residues 340 to 357 and 358 to 375; these read IGGS…DNRI and DGGA…ADIL.

The protein belongs to the peptidase M10B family. Requires Ca(2+) as cofactor. Zn(2+) is required as a cofactor.

The protein localises to the secreted. It catalyses the reaction Preferential cleavage of bonds with hydrophobic residues in P1'.. The sequence is that of Serralysin G (prtG) from Dickeya chrysanthemi (Pectobacterium chrysanthemi).